The sequence spans 396 residues: Probable sugar efflux transporter (396 aa).

12 helical membrane-spanning segments follow: residues 15-35 (VVTLAVAAFIFNTTEFVPVGL), 50-70 (VGIMLTIYAWVVALMSLPFML), 81-101 (LICLFVVFIASHVLSFLSWSF), 103-123 (VLVISRIGVAFAHAIFWSITA), 136-156 (AQALSLIATGTALAMVLGLPL), 170-190 (FFAIGIGALITLLCLIKLLPL), 209-229 (PALMSIYLLTVVVVTAHYTAY), 246-266 (FATALLLLLGGAGIIGSVIFG), 275-295 (ALVSTAIALLLVCLALLLPAA), 299-319 (IHLGVLSIFWGIAMMLIGLGM), 333-353 (VAMALFSGIFNIGIGAGALVG), and 364-384 (MIGYVGAVPAFAALIWSIIIF).

The protein belongs to the major facilitator superfamily. SotB (TC 2.A.1.2) family.

It is found in the cell inner membrane. Its function is as follows. Involved in the efflux of sugars. The physiological role may be the reduction of the intracellular concentration of toxic sugars or sugar metabolites. In Shigella boydii serotype 18 (strain CDC 3083-94 / BS512), this protein is Probable sugar efflux transporter.